The chain runs to 194 residues: Thiol:disulfide interchange protein CycY (194 aa).

The signal sequence occupies residues 1 to 37 (MSEQSTSANPQRRTFLMVLPLIAFIGLALLFWFRLGS). In terms of domain architecture, Thioredoxin spans 46 to 190 (ALIGRPAPQT…LRSVLLPQME (145 aa)). A disulfide bond links C92 and C95.

Belongs to the thioredoxin family. DsbE subfamily.

It is found in the periplasm. Functionally, required for disulfide bond formation in some periplasmic proteins. Also acts as a disulfide oxidoreductase in cytochromes c biogenesis. The cysteines of apocytochromes c must be in the reduced state for covalent linkage between the two moieties to occur. The polypeptide is Thiol:disulfide interchange protein CycY (cycY) (Bradyrhizobium diazoefficiens (strain JCM 10833 / BCRC 13528 / IAM 13628 / NBRC 14792 / USDA 110)).